A 125-amino-acid chain; its full sequence is Small ribosomal subunit protein uS12 (125 aa).

Position 89 is a 3-methylthioaspartic acid (Asp-89). Residues 105–125 are disordered; sequence QGVKDRKQSRSKYGAKKPKAK. A compositionally biased stretch (basic residues) spans 113–125; it reads SRSKYGAKKPKAK.

Belongs to the universal ribosomal protein uS12 family. As to quaternary structure, part of the 30S ribosomal subunit. Contacts proteins S8 and S17. May interact with IF1 in the 30S initiation complex.

With S4 and S5 plays an important role in translational accuracy. Functionally, interacts with and stabilizes bases of the 16S rRNA that are involved in tRNA selection in the A site and with the mRNA backbone. Located at the interface of the 30S and 50S subunits, it traverses the body of the 30S subunit contacting proteins on the other side and probably holding the rRNA structure together. The combined cluster of proteins S8, S12 and S17 appears to hold together the shoulder and platform of the 30S subunit. The chain is Small ribosomal subunit protein uS12 from Delftia acidovorans (strain DSM 14801 / SPH-1).